A 578-amino-acid polypeptide reads, in one-letter code: Zinc finger protein with KRAB and SCAN domains 8 (578 aa).

Residues 1 to 20 (MAEESRKPSAPSPPDQTPEE) are disordered. Phosphoserine is present on serine 12. Residue lysine 26 forms a Glycyl lysine isopeptide (Lys-Gly) (interchain with G-Cter in SUMO2) linkage. Positions 51 to 133 (RLRFRQLRYQ…TLLEDLERQI (83 aa)) constitute an SCAN box domain. The disordered stretch occupies residues 158–205 (ASAPEPPNTQLQSEATQHKSPVPQESQERAMSTSQSPTRSQKGSSGDQ). Residues 165-205 (NTQLQSEATQHKSPVPQESQERAMSTSQSPTRSQKGSSGDQ) show a composition bias toward polar residues. Glycyl lysine isopeptide (Lys-Gly) (interchain with G-Cter in SUMO2) cross-links involve residues lysine 176 and lysine 199. Serine 201 carries the phosphoserine modification. Residues 220–316 (EKIEDMAVSL…GRLERQRGNP (97 aa)) form the KRAB domain. Glycyl lysine isopeptide (Lys-Gly) (interchain with G-Cter in SUMO2) cross-links involve residues lysine 221, lysine 272, and lysine 288. 2 C2H2-type zinc fingers span residues 322 to 344 (HKCD…WRIH) and 350 to 372 (YQCN…QDIH). Residues lysine 374 and lysine 376 each participate in a glycyl lysine isopeptide (Lys-Gly) (interchain with G-Cter in SUMO2) cross-link. 7 consecutive C2H2-type zinc fingers follow at residues 378 to 400 (YHCK…QRIH), 406 to 428 (YQCN…QRIH), 434 to 456 (YECN…QRIH), 462 to 484 (YECD…QRSH), 490 to 512 (YKCN…QRIH), 518 to 540 (YKCK…LRIH), and 546 to 568 (YQCN…QRIH). Glycyl lysine isopeptide (Lys-Gly) (interchain with G-Cter in SUMO2) cross-links involve residues lysine 413 and lysine 441. Lysine 502 is covalently cross-linked (Glycyl lysine isopeptide (Lys-Gly) (interchain with G-Cter in SUMO2)). Lysine 572 participates in a covalent cross-link: Glycyl lysine isopeptide (Lys-Gly) (interchain with G-Cter in SUMO2).

This sequence belongs to the krueppel C2H2-type zinc-finger protein family.

It is found in the nucleus. May be involved in transcriptional regulation. The polypeptide is Zinc finger protein with KRAB and SCAN domains 8 (ZKSCAN8) (Homo sapiens (Human)).